The sequence spans 1446 residues: Major viral transcription factor ICP4 homolog (1446 aa).

Disordered regions lie at residues 25–59, 73–493, 801–987, and 1385–1446; these read AEEE…GGLF, AAAG…PPAD, PGPA…HTPR, and THRP…LLLR. Over residues 73 to 94 the composition is skewed to low complexity; it reads AAAGATRPPRPPSAQQQQQPRR. Positions 101 to 112 are enriched in acidic residues; it reads VLDDEDEEEDEP. Composition is skewed to low complexity over residues 166-189 and 216-241; these read RSSP…APRR and PAAV…PVSA. Residues 262 to 277 show a composition bias toward basic and acidic residues; the sequence is REPLLDEPAAARRLDP. Low complexity-rich tracts occupy residues 284–306 and 345–397; these read SPVS…ETVA and GFSS…SSSS. Positions 415 to 426 are enriched in pro residues; that stretch reads GPPPSPPAPAAA. Positions 427–442 are enriched in low complexity; sequence PRPSASSASSSAAASP. The segment covering 803-815 has biased composition (pro residues); the sequence is PAEPAPGLPPLWP. Low complexity predominate over residues 827–877; that stretch reads PAAAGAPSGLPGSGPSSPASTKSSSSTKSSSSTKSGLSGSSGYASSPAAGP. The span at 883–892 shows a compositional bias: basic residues; the sequence is RRKKKRRAPG. Residues 933–952 show a composition bias toward low complexity; it reads LGLGPAPDPAPALLSSSSSS.

This sequence belongs to the herpesviridae ICP4 family. In terms of processing, a long stretch of serine residues may be a major site of phosphorylation.

It localises to the host nucleus. Functionally, this IE protein is a multifunctional protein capable of migrating to the nucleus, binding to DNA, trans-activating other viral genes, and autoregulating its own synthesis. The polypeptide is Major viral transcription factor ICP4 homolog (IE) (Suid herpesvirus 1 (strain Kaplan) (SuHV-1)).